An 87-amino-acid polypeptide reads, in one-letter code: Translation initiation factor IF-1 2 (87 aa).

The S1-like domain maps to 1-72 (MAKEELLELD…TKGRINFRHK (72 aa)). A disordered region spans residues 68 to 87 (NFRHKDANSPRPPRSGQPRR). Over residues 77–87 (PRPPRSGQPRR) the composition is skewed to pro residues.

The protein belongs to the IF-1 family. In terms of assembly, component of the 30S ribosomal translation pre-initiation complex which assembles on the 30S ribosome in the order IF-2 and IF-3, IF-1 and N-formylmethionyl-tRNA(fMet); mRNA recruitment can occur at any time during PIC assembly.

The protein localises to the cytoplasm. Functionally, one of the essential components for the initiation of protein synthesis. Stabilizes the binding of IF-2 and IF-3 on the 30S subunit to which N-formylmethionyl-tRNA(fMet) subsequently binds. Helps modulate mRNA selection, yielding the 30S pre-initiation complex (PIC). Upon addition of the 50S ribosomal subunit IF-1, IF-2 and IF-3 are released leaving the mature 70S translation initiation complex. The protein is Translation initiation factor IF-1 2 of Burkholderia cenocepacia (strain HI2424).